A 317-amino-acid polypeptide reads, in one-letter code: Signal recognition particle receptor FtsY (317 aa).

GTP contacts are provided by residues G117–T124, D199–R203, and T263–D266.

It belongs to the GTP-binding SRP family. FtsY subfamily. In terms of assembly, part of the signal recognition particle protein translocation system, which is composed of SRP and FtsY.

The protein localises to the cell membrane. Its subcellular location is the cytoplasm. The catalysed reaction is GTP + H2O = GDP + phosphate + H(+). Its function is as follows. Involved in targeting and insertion of nascent membrane proteins into the cytoplasmic membrane. Acts as a receptor for the complex formed by the signal recognition particle (SRP) and the ribosome-nascent chain (RNC). This is Signal recognition particle receptor FtsY from Deinococcus radiodurans (strain ATCC 13939 / DSM 20539 / JCM 16871 / CCUG 27074 / LMG 4051 / NBRC 15346 / NCIMB 9279 / VKM B-1422 / R1).